The following is a 141-amino-acid chain: MNNLTNPSKLALNSSLTKTGRRKTSIATVQLFPGNGEFTINGISGIEYMQQKEELIFAIQEPLHFLKLKNEFNLIIKVKGGGLVGQVNAIKLGIARALCEFDLTYRNSLKLKGFLTRDPRCKERKKYGLKKARKAPQFSKR.

The protein belongs to the universal ribosomal protein uS9 family.

It localises to the plastid. The protein localises to the chloroplast. This is Small ribosomal subunit protein uS9c (rps9) from Tupiella akineta (Green alga).